The sequence spans 130 residues: Galectin-2 (130 aa).

The Galectin domain occupies 4–130 (KFEVKDLNMK…GLQISSFKLE (127 aa)). 65 to 71 (WGQEQRE) is a binding site for a beta-D-galactoside.

In terms of assembly, homodimer.

Functionally, this protein binds beta-galactoside. Its physiological function is not yet known. This is Galectin-2 (Lgals2) from Mus musculus (Mouse).